A 413-amino-acid polypeptide reads, in one-letter code: Glucose-1-phosphate adenylyltransferase (413 aa).

Residues G169, 184 to 185, and S201 contribute to the alpha-D-glucose 1-phosphate site; that span reads EK.

The protein belongs to the bacterial/plant glucose-1-phosphate adenylyltransferase family. Homotetramer.

It carries out the reaction alpha-D-glucose 1-phosphate + ATP + H(+) = ADP-alpha-D-glucose + diphosphate. It functions in the pathway glycan biosynthesis; glycogen biosynthesis. In terms of biological role, involved in the biosynthesis of ADP-glucose, a building block required for the elongation reactions to produce glycogen. Catalyzes the reaction between ATP and alpha-D-glucose 1-phosphate (G1P) to produce pyrophosphate and ADP-Glc. The polypeptide is Glucose-1-phosphate adenylyltransferase (Trichlorobacter lovleyi (strain ATCC BAA-1151 / DSM 17278 / SZ) (Geobacter lovleyi)).